Reading from the N-terminus, the 331-residue chain is T-cell acute lymphocytic leukemia protein 1 (331 aa).

The segment covering 1–22 has biased composition (basic and acidic residues); that stretch reads MTERPPSEAARSDPQLEGRDAA. Disordered stretches follow at residues 1–27 and 40–86; these read MTER…ASMA and ETSR…EARH. Ser-12 is subject to Phosphoserine. Residues 56–70 are compositionally biased toward gly residues; it reads ARGGPGGGPAGGGGA. Basic and acidic residues predominate over residues 72–86; that stretch reads RDLKGRDAATAEARH. 2 positions are modified to phosphoserine: Ser-122 and Ser-172. The bHLH domain maps to 187–239; sequence VRRIFTNSRERWRQQNVNGAFAELRKLIPTHPPDKKLSKNEILRLAMKYINFL. Residues 249–331 are disordered; it reads EGTQRAKTGK…LPAADGAGPR (83 aa). A compositionally biased stretch (gly residues) spans 263-275; the sequence is GAGGGGGGGGGGA.

As to quaternary structure, efficient DNA binding requires dimerization with another bHLH protein. Forms heterodimers with TCF3. Binds to the LIM domain containing protein LMO2 and to DRG1. Can assemble in a complex with LDB1 and LMO2. Component of a TAL-1 complex composed at least of CBFA2T3, LDB1, TAL1 and TCF3. Interacts with SBNO2; this interaction inhibits TAL1 occupancy of the DCSTAMP promoter, leading to the activation of the DCSTAMP promoter by the transcription factor MITF. Phosphorylated on serine residues. Phosphorylation of Ser-122 is strongly stimulated by hypoxia. Post-translationally, ubiquitinated; subsequent to hypoxia-dependent phosphorylation of Ser-122, ubiquitination targets the protein for rapid degradation via the ubiquitin system. This process may be characteristic for microvascular endothelial cells, since it could not be observed in large vessel endothelial cells. As to expression, leukemic stem cell.

The protein resides in the nucleus. In terms of biological role, implicated in the genesis of hemopoietic malignancies. It may play an important role in hemopoietic differentiation. Serves as a positive regulator of erythroid differentiation. This chain is T-cell acute lymphocytic leukemia protein 1 (TAL1), found in Homo sapiens (Human).